The primary structure comprises 397 residues: Phosphoglycerate kinase (397 aa).

Substrate-binding positions include 21–23 (DVN), arginine 36, 59–62 (HFGR), arginine 119, and arginine 152. Residues lysine 202, glutamate 324, and 354–357 (GGDT) contribute to the ATP site.

It belongs to the phosphoglycerate kinase family. As to quaternary structure, monomer.

It localises to the cytoplasm. It carries out the reaction (2R)-3-phosphoglycerate + ATP = (2R)-3-phospho-glyceroyl phosphate + ADP. The protein operates within carbohydrate degradation; glycolysis; pyruvate from D-glyceraldehyde 3-phosphate: step 2/5. This is Phosphoglycerate kinase from Cereibacter sphaeroides (strain ATCC 17029 / ATH 2.4.9) (Rhodobacter sphaeroides).